We begin with the raw amino-acid sequence, 236 residues long: Phosphoribosylaminoimidazole-succinocarboxamide synthase (236 aa).

It belongs to the SAICAR synthetase family.

It carries out the reaction 5-amino-1-(5-phospho-D-ribosyl)imidazole-4-carboxylate + L-aspartate + ATP = (2S)-2-[5-amino-1-(5-phospho-beta-D-ribosyl)imidazole-4-carboxamido]succinate + ADP + phosphate + 2 H(+). Its pathway is purine metabolism; IMP biosynthesis via de novo pathway; 5-amino-1-(5-phospho-D-ribosyl)imidazole-4-carboxamide from 5-amino-1-(5-phospho-D-ribosyl)imidazole-4-carboxylate: step 1/2. This Akkermansia muciniphila (strain ATCC BAA-835 / DSM 22959 / JCM 33894 / BCRC 81048 / CCUG 64013 / CIP 107961 / Muc) protein is Phosphoribosylaminoimidazole-succinocarboxamide synthase.